The following is a 223-amino-acid chain: Pyridoxine/pyridoxamine 5'-phosphate oxidase (223 aa).

Residues 8–11 (RVDY) and lysine 65 each bind substrate. FMN is bound by residues 60–65 (RTVLLK), 75–76 (YT), arginine 81, lysine 82, and glutamine 104. Substrate is bound by residues tyrosine 122, arginine 126, and serine 130. Residues 139-140 (QS) and tryptophan 188 contribute to the FMN site. 194 to 196 (RLH) is a substrate binding site. Arginine 198 serves as a coordination point for FMN.

The protein belongs to the pyridoxamine 5'-phosphate oxidase family. As to quaternary structure, homodimer. Requires FMN as cofactor.

It carries out the reaction pyridoxamine 5'-phosphate + O2 + H2O = pyridoxal 5'-phosphate + H2O2 + NH4(+). It catalyses the reaction pyridoxine 5'-phosphate + O2 = pyridoxal 5'-phosphate + H2O2. It participates in cofactor metabolism; pyridoxal 5'-phosphate salvage; pyridoxal 5'-phosphate from pyridoxamine 5'-phosphate: step 1/1. Its pathway is cofactor metabolism; pyridoxal 5'-phosphate salvage; pyridoxal 5'-phosphate from pyridoxine 5'-phosphate: step 1/1. In terms of biological role, catalyzes the oxidation of either pyridoxine 5'-phosphate (PNP) or pyridoxamine 5'-phosphate (PMP) into pyridoxal 5'-phosphate (PLP). In Kineococcus radiotolerans (strain ATCC BAA-149 / DSM 14245 / SRS30216), this protein is Pyridoxine/pyridoxamine 5'-phosphate oxidase.